A 413-amino-acid chain; its full sequence is Serine hydroxymethyltransferase (413 aa).

Residues leucine 119 and 123–125 (GHL) each bind (6S)-5,6,7,8-tetrahydrofolate. Position 228 is an N6-(pyridoxal phosphate)lysine (lysine 228).

Belongs to the SHMT family. Homodimer. Pyridoxal 5'-phosphate serves as cofactor.

It localises to the cytoplasm. The enzyme catalyses (6R)-5,10-methylene-5,6,7,8-tetrahydrofolate + glycine + H2O = (6S)-5,6,7,8-tetrahydrofolate + L-serine. Its pathway is one-carbon metabolism; tetrahydrofolate interconversion. The protein operates within amino-acid biosynthesis; glycine biosynthesis; glycine from L-serine: step 1/1. Its function is as follows. Catalyzes the reversible interconversion of serine and glycine with tetrahydrofolate (THF) serving as the one-carbon carrier. This reaction serves as the major source of one-carbon groups required for the biosynthesis of purines, thymidylate, methionine, and other important biomolecules. Also exhibits THF-independent aldolase activity toward beta-hydroxyamino acids, producing glycine and aldehydes, via a retro-aldol mechanism. This Desulfatibacillum aliphaticivorans protein is Serine hydroxymethyltransferase.